Here is a 148-residue protein sequence, read N- to C-terminus: Small ribosomal subunit protein eS12B (148 aa).

It belongs to the eukaryotic ribosomal protein eS12 family. Component of the small ribosomal subunit (SSU). Mature yeast ribosomes consist of a small (40S) and a large (60S) subunit. The 40S small subunit contains 1 molecule of ribosomal RNA (18S rRNA) and at least 33 different proteins. The large 60S subunit contains 3 rRNA molecules (25S, 5.8S and 5S rRNA) and at least 46 different proteins.

The protein resides in the cytoplasm. Component of the ribosome, a large ribonucleoprotein complex responsible for the synthesis of proteins in the cell. The small ribosomal subunit (SSU) binds messenger RNAs (mRNAs) and translates the encoded message by selecting cognate aminoacyl-transfer RNA (tRNA) molecules. The large subunit (LSU) contains the ribosomal catalytic site termed the peptidyl transferase center (PTC), which catalyzes the formation of peptide bonds, thereby polymerizing the amino acids delivered by tRNAs into a polypeptide chain. The nascent polypeptides leave the ribosome through a tunnel in the LSU and interact with protein factors that function in enzymatic processing, targeting, and the membrane insertion of nascent chains at the exit of the ribosomal tunnel. This chain is Small ribosomal subunit protein eS12B (rps1202), found in Schizosaccharomyces pombe (strain 972 / ATCC 24843) (Fission yeast).